The primary structure comprises 465 residues: UDP-N-acetylmuramate--L-alanine ligase (465 aa).

Residue 115 to 121 (GAHGKTT) participates in ATP binding.

The protein belongs to the MurCDEF family.

Its subcellular location is the cytoplasm. The catalysed reaction is UDP-N-acetyl-alpha-D-muramate + L-alanine + ATP = UDP-N-acetyl-alpha-D-muramoyl-L-alanine + ADP + phosphate + H(+). It participates in cell wall biogenesis; peptidoglycan biosynthesis. Its function is as follows. Cell wall formation. The chain is UDP-N-acetylmuramate--L-alanine ligase from Coxiella burnetii (strain CbuK_Q154) (Coxiella burnetii (strain Q154)).